We begin with the raw amino-acid sequence, 41 residues long: Trypsin inhibitor (41 aa).

3 disulfide bridges follow: Cys-15/Cys-26, Cys-17/Cys-24, and Cys-29/Cys-37.

Its function is as follows. Has two active sites that simultaneously bind and inhibit trypsin. In Trichosanthes kirilowii (Chinese snake gourd), this protein is Trypsin inhibitor.